Consider the following 586-residue polypeptide: Asparagine synthetase, nodule [glutamine-hydrolyzing] (586 aa).

C2 functions as the For GATase activity in the catalytic mechanism. Residues 2–185 (CGILAVLGCS…PGHLYSSKER (184 aa)) enclose the Glutamine amidotransferase type-2 domain. L-glutamine-binding positions include 50-54 (RLAIV), 75-77 (NGE), and D98. Positions 193–517 (PPWFNEAIIP…PQNSARLTVP (325 aa)) constitute an Asparagine synthetase domain. ATP is bound by residues L232, V268, and 342–343 (SG).

In terms of tissue distribution, root nodules.

It carries out the reaction L-aspartate + L-glutamine + ATP + H2O = L-asparagine + L-glutamate + AMP + diphosphate + H(+). The protein operates within amino-acid biosynthesis; L-asparagine biosynthesis; L-asparagine from L-aspartate (L-Gln route): step 1/1. The protein is Asparagine synthetase, nodule [glutamine-hydrolyzing] (AS1) of Pisum sativum (Garden pea).